The following is a 185-amino-acid chain: MNLQHHFLIAMPLLQNTYFERSVIYVCEHNENGAMGLMINQPVARFTLERLLKKLNISSVHDAGHLNKPVMSGGPLSDDRGFILHSPQSGFNSSIHVSDDTMITTSKDILKTLGTKKQPKNIMVAVGYTGWQKGQLEQELIDNVWLTTKADTEILFNTLIPNRWYEAASKLGINIFHIAQQAGHA.

Belongs to the UPF0301 (AlgH) family.

The polypeptide is UPF0301 protein HDEF_0602 (Hamiltonella defensa subsp. Acyrthosiphon pisum (strain 5AT)).